The following is a 78-amino-acid chain: Toxin-like protein 10 (78 aa).

An N-terminal signal peptide occupies residues 1-23 (MKATALLIAVFILFSVFGDMGYC).

Contains 4 disulfide bonds. In terms of tissue distribution, expressed by the venom gland.

It localises to the secreted. The chain is Toxin-like protein 10 from Urodacus yaschenkoi (Inland robust scorpion).